A 277-amino-acid chain; its full sequence is MALFIFLILVGYLMGSINSAIIVCRTFGLPDPREEGSKNPGATNVLRLGGKQYGIMVMVFDALKGILPVILAKLLSAEPVTVAFTALAAVVGHMYPVFFHFRGGKGVATTIGALLAFHFVIGVMVAATWLLVANFWRYSSLASIASISLAPFYSLILVGNLNIFPPLFMITILVLYKHRDNFNRLIDGKEPKIKFKHSVIEEIMEASPATSAEQEFPGKEVIDTNIDETEKTEQAEAVKKPKVKKATTKAKKTTSKEETTKKPKSTKPKTKTVKEKE.

5 helical membrane-spanning segments follow: residues 3-23 (LFIF…AIIV), 55-75 (IMVM…AKLL), 79-99 (PVTV…PVFF), 111-131 (IGAL…TWLL), and 155-175 (LILV…ILVL). The tract at residues 207-277 (SPATSAEQEF…PKTKTVKEKE (71 aa)) is disordered. Positions 216-239 (FPGKEVIDTNIDETEKTEQAEAVK) are enriched in basic and acidic residues. Basic residues-rich tracts occupy residues 240 to 253 (KPKV…AKKT) and 262 to 271 (KPKSTKPKTK).

This sequence belongs to the PlsY family. Probably interacts with PlsX.

It is found in the cell inner membrane. It carries out the reaction an acyl phosphate + sn-glycerol 3-phosphate = a 1-acyl-sn-glycero-3-phosphate + phosphate. The protein operates within lipid metabolism; phospholipid metabolism. Functionally, catalyzes the transfer of an acyl group from acyl-phosphate (acyl-PO(4)) to glycerol-3-phosphate (G3P) to form lysophosphatidic acid (LPA). This enzyme utilizes acyl-phosphate as fatty acyl donor, but not acyl-CoA or acyl-ACP. The sequence is that of Glycerol-3-phosphate acyltransferase from Legionella pneumophila (strain Corby).